We begin with the raw amino-acid sequence, 467 residues long: Asparagine--tRNA ligase (467 aa).

It belongs to the class-II aminoacyl-tRNA synthetase family. In terms of assembly, homodimer.

The protein resides in the cytoplasm. It catalyses the reaction tRNA(Asn) + L-asparagine + ATP = L-asparaginyl-tRNA(Asn) + AMP + diphosphate + H(+). The polypeptide is Asparagine--tRNA ligase (Histophilus somni (strain 129Pt) (Haemophilus somnus)).